A 442-amino-acid chain; its full sequence is Histidinol dehydrogenase (442 aa).

Residues 1–20 (MLNVTDLRGQTPSKSDIRRA) form a disordered region. The NAD(+) site is built by Y129, Q193, and N218. T241, Q263, and H266 together coordinate substrate. Zn(2+)-binding residues include Q263 and H266. Residues E332 and H333 each act as proton acceptor in the active site. Substrate contacts are provided by H333, D366, E420, and H425. Position 366 (D366) interacts with Zn(2+). H425 contributes to the Zn(2+) binding site.

The protein belongs to the histidinol dehydrogenase family. The cofactor is Zn(2+).

The enzyme catalyses L-histidinol + 2 NAD(+) + H2O = L-histidine + 2 NADH + 3 H(+). Its pathway is amino-acid biosynthesis; L-histidine biosynthesis; L-histidine from 5-phospho-alpha-D-ribose 1-diphosphate: step 9/9. In terms of biological role, catalyzes the sequential NAD-dependent oxidations of L-histidinol to L-histidinaldehyde and then to L-histidine. In Corynebacterium glutamicum (strain ATCC 13032 / DSM 20300 / JCM 1318 / BCRC 11384 / CCUG 27702 / LMG 3730 / NBRC 12168 / NCIMB 10025 / NRRL B-2784 / 534), this protein is Histidinol dehydrogenase.